The chain runs to 218 residues: Large ribosomal subunit protein bL25 (218 aa).

The tract at residues 187-218 (SATAAVEEAKEDGAPEESAQGQGAAEAQETGK) is disordered. Residues 202 to 218 (EESAQGQGAAEAQETGK) show a composition bias toward low complexity.

Belongs to the bacterial ribosomal protein bL25 family. CTC subfamily. Part of the 50S ribosomal subunit; part of the 5S rRNA/L5/L18/L25 subcomplex. Contacts the 5S rRNA. Binds to the 5S rRNA independently of L5 and L18.

In terms of biological role, this is one of the proteins that binds to the 5S RNA in the ribosome where it forms part of the central protuberance. This is Large ribosomal subunit protein bL25 from Anaplasma marginale (strain Florida).